We begin with the raw amino-acid sequence, 504 residues long: Glucose-6-phosphate isomerase (504 aa).

The active-site Proton donor is the Glu-333. Catalysis depends on residues His-364 and Lys-473.

It belongs to the GPI family.

The protein localises to the cytoplasm. It catalyses the reaction alpha-D-glucose 6-phosphate = beta-D-fructose 6-phosphate. It participates in carbohydrate biosynthesis; gluconeogenesis. The protein operates within carbohydrate degradation; glycolysis; D-glyceraldehyde 3-phosphate and glycerone phosphate from D-glucose: step 2/4. Catalyzes the reversible isomerization of glucose-6-phosphate to fructose-6-phosphate. The protein is Glucose-6-phosphate isomerase of Xanthomonas axonopodis pv. citri (strain 306).